We begin with the raw amino-acid sequence, 306 residues long: UDP-N-acetylenolpyruvoylglucosamine reductase (306 aa).

The FAD-binding PCMH-type domain maps to 33–197 (TGGEADFYLS…LEAAFTLEPG (165 aa)). Arg-176 is an active-site residue. Ser-226 functions as the Proton donor in the catalytic mechanism. Glu-296 is an active-site residue.

The protein belongs to the MurB family. Requires FAD as cofactor.

The protein localises to the cytoplasm. The catalysed reaction is UDP-N-acetyl-alpha-D-muramate + NADP(+) = UDP-N-acetyl-3-O-(1-carboxyvinyl)-alpha-D-glucosamine + NADPH + H(+). The protein operates within cell wall biogenesis; peptidoglycan biosynthesis. Functionally, cell wall formation. This Staphylococcus epidermidis (strain ATCC 35984 / DSM 28319 / BCRC 17069 / CCUG 31568 / BM 3577 / RP62A) protein is UDP-N-acetylenolpyruvoylglucosamine reductase.